Here is a 112-residue protein sequence, read N- to C-terminus: Nitrogen regulatory protein GlnK2 (112 aa).

ADP contacts are provided by residues Thr29, 37–39 (GVQ), Val64, and 87–90 (GDGK). ATP is bound by residues Thr29, 37 to 39 (GVQ), Val64, and 87 to 90 (GDGK).

The protein belongs to the P(II) protein family. Homotrimer. Interacts and forms a complex with Amt2.

It is found in the cytoplasm. In terms of biological role, involved in the regulation of nitrogen metabolism. Regulates the activity of its targets by protein-protein interaction in response to the nitrogen status of the cell. Regulates the activity of the ammonia channel Amt2 via direct interaction. This is Nitrogen regulatory protein GlnK2 from Methanocaldococcus jannaschii (strain ATCC 43067 / DSM 2661 / JAL-1 / JCM 10045 / NBRC 100440) (Methanococcus jannaschii).